Here is a 57-residue protein sequence, read N- to C-terminus: Potassium channel toxin alpha-KTx 23.3 (57 aa).

The first 23 residues, 1–23, serve as a signal peptide directing secretion; the sequence is MKMSIVIILLLFTCLIATNGASG. 4 disulfide bridges follow: cysteine 26/cysteine 46, cysteine 32/cysteine 51, cysteine 36/cysteine 53, and cysteine 41/cysteine 56.

It belongs to the short scorpion toxin superfamily. Potassium channel inhibitor family. Alpha-KTx 23 subfamily. In terms of tissue distribution, expressed by the venom gland.

The protein resides in the secreted. Its function is as follows. This toxin shows both immunosuppressive and anti-inflammatory activities. It has the potential to inhibit human T cell activation, since it reduces IL-2 secretion and the expression of T cell activation marker CD69 and acts as an anti-inflammatory agent, since it provokes the reduction of secretion of both IFN-gamma and TNF-alpha. In vivo, the delayed-type hypersensitivity response in rat autoimmune disease model is ameliorated in the presence of this toxin. Acts by blocking Kv1.3/KCNA3 potassium channels of T-lymphocytes. The sequence is that of Potassium channel toxin alpha-KTx 23.3 from Scorpiops tibetanus (Scorpion).